Reading from the N-terminus, the 210-residue chain is Histone H1A (210 aa).

2 disordered regions span residues 1-49 and 101-210; these read MAEA…VSEQ and KGSG…PKKK. Low complexity-rich tracts occupy residues 26–45 and 129–142; these read KKAAAARGAAKSKKPSSGPS and PLAAEAKKPAAAAK. One can recognise an H15 domain in the interval 42–113; it reads SGPSVSEQIV…GASGSFKLNK (72 aa). 2 stretches are compositionally biased toward basic residues: residues 143-153 and 160-180; these read KTAKSPKKPKK and SPKKLKKPAKAAKSPAKKTAV. Positions 181-192 are enriched in low complexity; that stretch reads KPKVAAKSPAKA. Basic residues predominate over residues 193–210; the sequence is KAAKPKVAKAKKAAPKKK.

This sequence belongs to the histone H1/H5 family.

It localises to the nucleus. The protein resides in the chromosome. In terms of biological role, histones H1 are necessary for the condensation of nucleosome chains into higher-order structures. The polypeptide is Histone H1A (Xenopus laevis (African clawed frog)).